The sequence spans 772 residues: MGRHLLLLLFSILYMLLCQASSSGVFELKLQEFLNKKGVQGNKNCCKGGLTTSYQQCECKTFFRICLKHYQPNASPEPPCTYGGTVTPVLGSNSFQVPDTLPDGSFTNPIRMNFGFTWPGTFSLIIEALHADSKEDLTTENPERIISTMTTQRHLTVGEDWSQDLHSVGRTELKYSYRFVCDEHYYGEGCSVFCRPRDDAFGHFTCGERGEIICDAGWKGQYCTEPICLPGCDEEHGFCEKPGECKCRVGFKGRYCDECIRYPGCLHGTCQQPWQCNCQEGWGGLFCNQDLNYCTHHKPCLNGATCSNTGQGSYTCSCRPGFSGASCEIEVNECTGNPCRNGGSCTDMENTYSCTCPPGFYGKNCELSAMTCADGPCFNGGRCADNPDGGYFCQCPTGYAGFNCEKKIDHCSSSPCSNGARCVDLVNSYLCQCPDGFTGMNCDRAGDECSMYPCQNGGTCQEGASGYMCTCPPGYTGRNCSSPVSRCQHNPCHNGATCHERNNRYVCACVSGYGGRNCQFLLPDRASQIASDVPWTAVGSGVLLVLLLVVACAVVVVCVRSKVQQRRRDREDEVANGENETINNLTNNCHRDKDLAVSVVGVAPVKNINKKIDFSSDHDDLSLTTEKRSYKTRHAPADYNLVHEVKFEVKHEVKLEHAGKETTMANELSDSCEDIKCQSLQDSSECTEEKRRKRLKSDASEKSKYSESRYSESKYSESKYSESKYSDVSLYSESACASACASASTSACVDTKYKSVMVMSEEKDECVIATEV.

Positions 1–20 are cleaved as a signal peptide; sequence MGRHLLLLLFSILYMLLCQA. Residues 21 to 536 lie on the Extracellular side of the membrane; it reads SSSGVFELKL…SQIASDVPWT (516 aa). Residues 179 to 223 enclose the DSL domain; it reads FVCDEHYYGEGCSVFCRPRDDAFGHFTCGERGEIICDAGWKGQYC. 26 disulfide bridges follow: Cys181/Cys190, Cys194/Cys206, Cys214/Cys223, Cys228/Cys239, Cys232/Cys245, Cys259/Cys270, Cys265/Cys276, Cys278/Cys287, Cys294/Cys306, Cys300/Cys316, Cys318/Cys327, Cys334/Cys345, Cys339/Cys354, Cys356/Cys365, Cys372/Cys383, Cys377/Cys393, Cys395/Cys404, Cys411/Cys422, Cys416/Cys431, Cys433/Cys442, Cys449/Cys460, Cys454/Cys469, Cys471/Cys480, Cys487/Cys498, Cys492/Cys507, and Cys509/Cys518. EGF-like domains lie at 225–257, 257–288, and 290–328; these read EPICLPGCDEEHGFCEKPGECKCRVGFKGRYCD, DECIRYPGCLHGTCQQPWQCNCQEGWGGLFCN, and DLNYCTHHKPCLNGATCSNTGQGSYTCSCRPGFSGASCE. Residues 330 to 366 enclose the EGF-like 4; calcium-binding domain; it reads EVNECTGNPCRNGGSCTDMENTYSCTCPPGFYGKNCE. 4 consecutive EGF-like domains span residues 368–405, 407–443, 445–481, and 483–519; these read SAMTCADGPCFNGGRCADNPDGGYFCQCPTGYAGFNCE, KIDHCSSSPCSNGARCVDLVNSYLCQCPDGFTGMNCD, AGDECSMYPCQNGGTCQEGASGYMCTCPPGYTGRNCS, and PVSRCQHNPCHNGATCHERNNRYVCACVSGYGGRNCQ. Asn479 carries N-linked (GlcNAc...) asparagine glycosylation. Residues 537 to 557 traverse the membrane as a helical segment; that stretch reads AVGSGVLLVLLLVVACAVVVV. Residues 558–772 are Cytoplasmic-facing; the sequence is CVRSKVQQRR…KDECVIATEV (215 aa). The interval 688–722 is disordered; it reads EEKRRKRLKSDASEKSKYSESRYSESKYSESKYSE. Basic and acidic residues predominate over residues 696-722; the sequence is KSDASEKSKYSESRYSESKYSESKYSE.

In terms of assembly, interacts with mib. Ubiquitinated by mib, leading to its endocytosis and subsequent degradation. Ubiquitinated by the ECS(ASB11) complex, leading to its degradation by the proteasome. In terms of tissue distribution, expressed in nervous system. In the developing nervous system, it is expressed in overlapping regions with deltaB (dlb) and deltaD (dld); in the neural plate, dla is expressed in patches of contiguous cells with dld, while dlb is confined to scattered cells within those patches that will differentiate as neurons. In 24 hours embryos, expressed in the hindbrain in stripes adjacent to rhombomere boundaries, but not in the actual boundary cells. During gastrulation and tail formation, expressed in embryonic midline cells. Expressed in hair cells of inner ear.

The protein resides in the membrane. Functionally, acts as a ligand for Notch receptors and is involved in primary neurogenesis. Can activate Notch receptors, thereby playing a key role in lateral inhibition, a process that prevents the immediate neighbors of each nascent neural cell from simultaneously embarking on neural differentiation. Required for boundary formation during segmentation of the hindbrain. Required for midline cell fate specification prior to germ layer formation; regulates specification of floorplate, notochord and hypochord. In inner ear, it prevents adjacent cells from adopting the same cell fate. Plays a role in angiogenesis. This Danio rerio (Zebrafish) protein is Delta-like protein A (dla).